Here is a 424-residue protein sequence, read N- to C-terminus: Enolase (424 aa).

Position 163 (Gln163) interacts with (2R)-2-phosphoglycerate. Glu204 functions as the Proton donor in the catalytic mechanism. Mg(2+)-binding residues include Asp241, Glu284, and Asp311. Residues Lys336, Arg365, Ser366, and Lys387 each contribute to the (2R)-2-phosphoglycerate site. Residue Lys336 is the Proton acceptor of the active site.

It belongs to the enolase family. The cofactor is Mg(2+).

It localises to the cytoplasm. The protein resides in the secreted. Its subcellular location is the cell surface. It carries out the reaction (2R)-2-phosphoglycerate = phosphoenolpyruvate + H2O. It functions in the pathway carbohydrate degradation; glycolysis; pyruvate from D-glyceraldehyde 3-phosphate: step 4/5. Its function is as follows. Catalyzes the reversible conversion of 2-phosphoglycerate (2-PG) into phosphoenolpyruvate (PEP). It is essential for the degradation of carbohydrates via glycolysis. The chain is Enolase from Dictyoglomus thermophilum (strain ATCC 35947 / DSM 3960 / H-6-12).